Reading from the N-terminus, the 314-residue chain is Protein translocase subunit SecF (314 aa).

The next 6 helical transmembrane spans lie at 17 to 37 (AVAV…TRGL), 137 to 157 (QGTY…WWRY), 158 to 178 (ELNF…ITLG), 188 to 210 (SLPV…IVVF), 250 to 270 (TLIV…GFAF), and 272 to 292 (LLVG…LLLV).

Belongs to the SecD/SecF family. SecF subfamily. As to quaternary structure, forms a complex with SecD. Part of the essential Sec protein translocation apparatus which comprises SecA, SecYEG and auxiliary proteins SecDF. Other proteins may also be involved.

The protein resides in the cell inner membrane. Its function is as follows. Part of the Sec protein translocase complex. Interacts with the SecYEG preprotein conducting channel. SecDF uses the proton motive force (PMF) to complete protein translocation after the ATP-dependent function of SecA. The sequence is that of Protein translocase subunit SecF from Desulfurispirillum indicum (strain ATCC BAA-1389 / DSM 22839 / S5).